Reading from the N-terminus, the 2300-residue chain is Adenylate cyclase (2300 aa).

2 stretches are compositionally biased toward polar residues: residues Met1–Thr21 and Thr28–Leu41. 3 disordered regions span residues Met1–Leu256, Gly272–Arg593, and Thr631–Asp652. 2 stretches are compositionally biased toward low complexity: residues Ser42 to Ser61 and Ser92 to Pro152. Positions Thr153–Ser169 are enriched in polar residues. Residues Ile170–Met185 are compositionally biased toward basic and acidic residues. A compositionally biased stretch (low complexity) spans Gln204–Gln221. A compositionally biased stretch (polar residues) spans Val228–Gln237. Residues Ser303–Ser313 show a composition bias toward low complexity. Residues Gly333–Ser344 show a composition bias toward basic and acidic residues. The segment covering Glu345–Met357 has biased composition (polar residues). Residues Pro410 to Glu421 show a composition bias toward pro residues. Polar residues predominate over residues Asp455–Ser469. The segment covering Lys484–Ser501 has biased composition (basic and acidic residues). The segment covering Asn511–Ala550 has biased composition (polar residues). Basic residues predominate over residues Ser552–Asn565. Over residues Thr631 to Lys643 the composition is skewed to low complexity. In terms of domain architecture, Ras-associating spans Ser749–Ser841. LRR repeat units follow at residues Asn867–Lys890, Ala892–Ala914, Cys915–Ala938, Ser939–Lys961, Leu962–Lys986, Leu988–Leu1008, Glu1009–Leu1031, Asn1033–Leu1055, Val1056–Arg1079, Glu1081–Phe1097, Glu1098–Val1119, Pro1120–Leu1142, Met1143–Leu1165, Lys1166–Leu1188, Thr1189–Ala1211, and Lys1213–Ala1234. The tract at residues Pro1228–Lys1336 is disordered. Polar residues predominate over residues Ala1253–Pro1263. A compositionally biased stretch (low complexity) spans Thr1313 to Val1327. LRR repeat units follow at residues Ser1349 to Glu1369, Leu1373 to Ser1396, Pro1398 to Glu1420, His1422 to Ala1445, Lys1447 to Trp1469, and Asn1474 to Pro1497. Residues Pro1552–Val1828 form the PPM-type phosphatase domain. Positions Phe1847 to Val1867 are disordered. Residues Ser1892–Ser2029 form the Guanylate cyclase domain. The Mg(2+) site is built by Asp1897 and Asp1940. The tract at residues Leu2272–Glu2300 is disordered. The segment covering Asp2290 to Glu2300 has biased composition (acidic residues).

It belongs to the adenylyl cyclase class-4/guanylyl cyclase family. The cofactor is Mg(2+).

It catalyses the reaction ATP = 3',5'-cyclic AMP + diphosphate. Its function is as follows. Plays essential roles in regulation of cellular metabolism by catalyzing the synthesis of a second messenger, cAMP. In Neurospora crassa (strain ATCC 24698 / 74-OR23-1A / CBS 708.71 / DSM 1257 / FGSC 987), this protein is Adenylate cyclase (cr-1).